The primary structure comprises 251 residues: Protein unc-119 homolog B (251 aa).

The interval 1–28 (MSGSNPKAAAAASAAGPGGLVAGKEEKK) is disordered. Ser-2 carries the N-acetylserine modification. Lys-24 carries the post-translational modification N6-acetyllysine. Residue Tyr-142 coordinates tetradecanoate.

The protein belongs to the PDE6D/unc-119 family. In terms of assembly, found in a complex with ARL3, RP2 and UNC119B; RP2 induces hydrolysis of GTP ARL3 in the complex, leading to the release of UNC119B. Interacts with NPHP3 (when myristoylated). Interacts with CYS1 (when myristoylated). Interacts with MACIR; interaction only takes place when UNC119B is not liganded with myristoylated proteins.

The protein resides in the cell projection. The protein localises to the cilium. In terms of biological role, myristoyl-binding protein that acts as a cargo adapter: specifically binds the myristoyl moiety of a subset of N-terminally myristoylated proteins and is required for their localization. Binds myristoylated NPHP3 and plays a key role in localization of NPHP3 to the primary cilium membrane. Does not bind all myristoylated proteins. Probably plays a role in trafficking proteins in photoreceptor cells. The polypeptide is Protein unc-119 homolog B (UNC119B) (Homo sapiens (Human)).